A 342-amino-acid chain; its full sequence is Deoxyguanosinetriphosphate triphosphohydrolase-like protein (342 aa).

Residues 75-190 form the HD domain; the sequence is RLVHTLEVSQ…VRFADKIAYV (116 aa).

It belongs to the dGTPase family. Type 2 subfamily.

The sequence is that of Deoxyguanosinetriphosphate triphosphohydrolase-like protein from Clostridium perfringens (strain SM101 / Type A).